Reading from the N-terminus, the 382-residue chain is Mannitol-1-phosphate 5-dehydrogenase (382 aa).

3 to 14 contacts NAD(+); it reads ALHFGAGNIGRG.

It belongs to the mannitol dehydrogenase family.

The catalysed reaction is D-mannitol 1-phosphate + NAD(+) = beta-D-fructose 6-phosphate + NADH + H(+). The sequence is that of Mannitol-1-phosphate 5-dehydrogenase from Salmonella paratyphi A (strain ATCC 9150 / SARB42).